The following is a 233-amino-acid chain: MKRGKNYQQAGEKFDRLTLYEPKEALELVKEIAKAKFDETVEVHIKLGVDPRHADQQVRGTVSLPNGTGKTRKVLVFAKGEKIKEAELAGADYVGGEDLAEKIQGGWFDFDVAVATPDMMAVVGKMGKILGPRGLMPNPKAGTVTFDIERTIKELKAGRIEYRVDKSAIVHAPIGRISFEVDKLQENLNAFAEALLKARPAAAKGQYMRSVTVCSTMSPGVKINPLVLMAANK.

Belongs to the universal ribosomal protein uL1 family. As to quaternary structure, part of the 50S ribosomal subunit.

Its function is as follows. Binds directly to 23S rRNA. The L1 stalk is quite mobile in the ribosome, and is involved in E site tRNA release. Functionally, protein L1 is also a translational repressor protein, it controls the translation of the L11 operon by binding to its mRNA. The protein is Large ribosomal subunit protein uL1 of Syntrophomonas wolfei subsp. wolfei (strain DSM 2245B / Goettingen).